The primary structure comprises 283 residues: 4-diphosphocytidyl-2-C-methyl-D-erythritol kinase (283 aa).

The active site involves K10. ATP is bound at residue 95-105 (PVAAGLGGGSS). Residue D137 is part of the active site.

The protein belongs to the GHMP kinase family. IspE subfamily.

It carries out the reaction 4-CDP-2-C-methyl-D-erythritol + ATP = 4-CDP-2-C-methyl-D-erythritol 2-phosphate + ADP + H(+). It functions in the pathway isoprenoid biosynthesis; isopentenyl diphosphate biosynthesis via DXP pathway; isopentenyl diphosphate from 1-deoxy-D-xylulose 5-phosphate: step 3/6. Functionally, catalyzes the phosphorylation of the position 2 hydroxy group of 4-diphosphocytidyl-2C-methyl-D-erythritol. In Pediococcus pentosaceus (strain ATCC 25745 / CCUG 21536 / LMG 10740 / 183-1w), this protein is 4-diphosphocytidyl-2-C-methyl-D-erythritol kinase.